The sequence spans 1228 residues: MTQDKSIEPFFLNKVVDKSQLRQLIIWAFRNYGIARASNMADTLKDLGFLYATKAGISLSLEDLRIPPAKNNLLKTTIDLINDTDTKYRKGEITAVERFQKVIDTWNSASDTLKKQVIKYFTEKDPLNSIYMMAFSGARANISQVRQLVGMRGLMADPQGQIIDLPISSNFREGLTITDYFISSYGARKGLVDTALRTADSGYLTRRLVDVAQDVIIREADCNTSKGIVLESMIDNRKTLVSLHQALIGRVLAEDLFNPAGSKLVAKLNTEISPDLANEIISLGISSVLVRSPITCESIKSVCQSCYGWNLAHGRIVDLGEAVGIIAAQSIGEPGTQLTMRTFHTGGVFTGELAQTVISSSDCQVEYPSNIILSDTRTRHGDHAFLVEKDIKLKLLDFNKKQTSLSLVKGSLLFVKHLEYITSGQVIAEYPISNRLITEKAQKAVLADFSGSIYLMDLSVSNIQSEQQTFKNVIKGGVIWILAGHVFSIPYNTQLIISENDFIDENHLIGKTEFVSRYEGRVRILKKKQDFIQDIVIITSSKTYINIDVLTKFYNGYTNHFLITNQQDKFILKTLPNQTIVDQQLIAELITNIYRTNTGGIIKYLDLSVSDKKVDLNSKKDYYDIVDGGYVLWIGEETHEINKDISLLLVSHGQLIDEGTEIVKNIFTNSSGIVDIIQKEGIVREIIIKPGILYPHSKFYDHKSKSRGFLKPGEIISNDLKTDKLVYWEYFYVKNQSYTLIRPVIVYSIPSKTIQFKYSADSFNSHICSLKLVKRIYFRDGERVKSVSGIDIVKTYLIAELNKDSLNLKCTLQLNLDSNNRSISRMRIVTMDKLSLKDENNIASTKDLYTRTRLLVTNNQYIKSGTVVAQTELFSSLEGQVVSIQKNKSSNPRILLITSLDTKVFSINNNQNIKVNINDLIYAGDEIATNIISYISGQVISIRDNQITVRLGQPYLISEGSFLHVNNQALIQRGENIATLIFERVKTGDIVQGLPRIEEILEARKKSDSFFNPHVVLDSKFRQYVNQGLNLYDATRLSLLILQLYLVKELQLVYQSQGVEIADKHIEVIVRQMTSKVKIENGGDTDHLPGEIIELQKIEMLNKALRLASKEEALYYPILLGITKASLNTESFISAASFQETTKVLTDAAISCKLDWLRGLKENVIIGRLIPAGTGFNIYNNMQLNYQDEKYSYTKNLLSLPQNTKNLNFEDIIVDDRNAHMYSRNNNL.

Zn(2+) is bound by residues Cys222, Cys296, Cys303, and Cys306.

It belongs to the RNA polymerase beta' chain family. RpoC2 subfamily. As to quaternary structure, in plastids the minimal PEP RNA polymerase catalytic core is composed of four subunits: alpha, beta, beta', and beta''. When a (nuclear-encoded) sigma factor is associated with the core the holoenzyme is formed, which can initiate transcription. It depends on Zn(2+) as a cofactor.

It is found in the plastid. The protein resides in the chloroplast. It catalyses the reaction RNA(n) + a ribonucleoside 5'-triphosphate = RNA(n+1) + diphosphate. In terms of biological role, DNA-dependent RNA polymerase catalyzes the transcription of DNA into RNA using the four ribonucleoside triphosphates as substrates. The polypeptide is DNA-directed RNA polymerase subunit beta'' (Gracilaria tenuistipitata var. liui (Red alga)).